The sequence spans 176 residues: Xanthine-guanine phosphoribosyltransferase (176 aa).

Residues 51-52 (RG) and 110-118 (DDLVDTGKT) contribute to the 5-phospho-alpha-D-ribose 1-diphosphate site. Mg(2+) is bound at residue aspartate 111. Positions 114 and 157 each coordinate guanine. Xanthine contacts are provided by aspartate 114 and isoleucine 157. Residues 114–118 (DTGKT) and 156–157 (WI) contribute to the GMP site.

Belongs to the purine/pyrimidine phosphoribosyltransferase family. XGPT subfamily. In terms of assembly, homotetramer. Mg(2+) is required as a cofactor.

The protein resides in the cell inner membrane. It carries out the reaction GMP + diphosphate = guanine + 5-phospho-alpha-D-ribose 1-diphosphate. It catalyses the reaction XMP + diphosphate = xanthine + 5-phospho-alpha-D-ribose 1-diphosphate. The catalysed reaction is IMP + diphosphate = hypoxanthine + 5-phospho-alpha-D-ribose 1-diphosphate. The protein operates within purine metabolism; GMP biosynthesis via salvage pathway; GMP from guanine: step 1/1. Its pathway is purine metabolism; XMP biosynthesis via salvage pathway; XMP from xanthine: step 1/1. Functionally, purine salvage pathway enzyme that catalyzes the transfer of the ribosyl-5-phosphate group from 5-phospho-alpha-D-ribose 1-diphosphate (PRPP) to the N9 position of the 6-oxopurines guanine and xanthine to form the corresponding ribonucleotides GMP (guanosine 5'-monophosphate) and XMP (xanthosine 5'-monophosphate), with the release of PPi. To a lesser extent, also acts on hypoxanthine. This chain is Xanthine-guanine phosphoribosyltransferase, found in Bradyrhizobium diazoefficiens (strain JCM 10833 / BCRC 13528 / IAM 13628 / NBRC 14792 / USDA 110).